The following is a 195-amino-acid chain: Imidazoleglycerol-phosphate dehydratase (195 aa).

Belongs to the imidazoleglycerol-phosphate dehydratase family.

It localises to the cytoplasm. The catalysed reaction is D-erythro-1-(imidazol-4-yl)glycerol 3-phosphate = 3-(imidazol-4-yl)-2-oxopropyl phosphate + H2O. It participates in amino-acid biosynthesis; L-histidine biosynthesis; L-histidine from 5-phospho-alpha-D-ribose 1-diphosphate: step 6/9. The protein is Imidazoleglycerol-phosphate dehydratase of Geobacter metallireducens (strain ATCC 53774 / DSM 7210 / GS-15).